The chain runs to 213 residues: Orotidine 5'-phosphate decarboxylase (213 aa).

Residues Asp-11, Lys-33, 61 to 70 (DLKLADIPNT), Ser-113, 166 to 176 (PGVGAQGGKAS), Gly-189, and Arg-190 each bind substrate. Residue Lys-63 is the Proton donor of the active site.

It belongs to the OMP decarboxylase family. Type 1 subfamily. In terms of assembly, homodimer.

It catalyses the reaction orotidine 5'-phosphate + H(+) = UMP + CO2. Its pathway is pyrimidine metabolism; UMP biosynthesis via de novo pathway; UMP from orotate: step 2/2. Functionally, catalyzes the decarboxylation of orotidine 5'-monophosphate (OMP) to uridine 5'-monophosphate (UMP). The sequence is that of Orotidine 5'-phosphate decarboxylase from Thermococcus kodakarensis (strain ATCC BAA-918 / JCM 12380 / KOD1) (Pyrococcus kodakaraensis (strain KOD1)).